The sequence spans 156 residues: Ribosomal RNA large subunit methyltransferase H (156 aa).

S-adenosyl-L-methionine is bound by residues leucine 73, glycine 104, and 123 to 128 (VSSLTL).

It belongs to the RNA methyltransferase RlmH family. As to quaternary structure, homodimer.

Its subcellular location is the cytoplasm. The catalysed reaction is pseudouridine(1915) in 23S rRNA + S-adenosyl-L-methionine = N(3)-methylpseudouridine(1915) in 23S rRNA + S-adenosyl-L-homocysteine + H(+). In terms of biological role, specifically methylates the pseudouridine at position 1915 (m3Psi1915) in 23S rRNA. The chain is Ribosomal RNA large subunit methyltransferase H from Paraburkholderia phymatum (strain DSM 17167 / CIP 108236 / LMG 21445 / STM815) (Burkholderia phymatum).